A 91-amino-acid polypeptide reads, in one-letter code: Large ribosomal subunit protein eL31 (91 aa).

This sequence belongs to the eukaryotic ribosomal protein eL31 family.

The polypeptide is Large ribosomal subunit protein eL31 (Pyrobaculum neutrophilum (strain DSM 2338 / JCM 9278 / NBRC 100436 / V24Sta) (Thermoproteus neutrophilus)).